The primary structure comprises 446 residues: Probable D-serine dehydratase (446 aa).

Lysine 116 bears the N6-(pyridoxal phosphate)lysine mark.

It belongs to the serine/threonine dehydratase family. DsdA subfamily. Pyridoxal 5'-phosphate is required as a cofactor.

The enzyme catalyses D-serine = pyruvate + NH4(+). This chain is Probable D-serine dehydratase, found in Bacillus cereus (strain 03BB102).